The sequence spans 470 residues: Cysteine--tRNA ligase (470 aa).

Cysteine 28 is a binding site for Zn(2+). A 'HIGH' region motif is present at residues 30-40 (PTVYNYIHIGN). Zn(2+)-binding residues include cysteine 212, histidine 237, and glutamate 241. A 'KMSKS' region motif is present at residues 271–275 (KMSKS). Lysine 274 provides a ligand contact to ATP.

This sequence belongs to the class-I aminoacyl-tRNA synthetase family. In terms of assembly, monomer. Zn(2+) serves as cofactor.

The protein resides in the cytoplasm. The enzyme catalyses tRNA(Cys) + L-cysteine + ATP = L-cysteinyl-tRNA(Cys) + AMP + diphosphate. The protein is Cysteine--tRNA ligase of Levilactobacillus brevis (strain ATCC 367 / BCRC 12310 / CIP 105137 / JCM 1170 / LMG 11437 / NCIMB 947 / NCTC 947) (Lactobacillus brevis).